An 84-amino-acid chain; its full sequence is U8-theraphotoxin-Hhn1e (84 aa).

The N-terminal stretch at 1–21 (MKVVLLVCLVWMMAMMELVSC) is a signal peptide. 5 disulfides stabilise this stretch: Cys-23/Cys-35, Cys-29/Cys-44, Cys-34/Cys-67, Cys-54/Cys-75, and Cys-69/Cys-81.

This sequence belongs to the AVIT (prokineticin) family. In terms of tissue distribution, expressed by the venom gland.

Its subcellular location is the secreted. This chain is U8-theraphotoxin-Hhn1e, found in Cyriopagopus hainanus (Chinese bird spider).